A 56-amino-acid chain; its full sequence is Ribosome modulation factor (56 aa).

It belongs to the ribosome modulation factor family.

Its subcellular location is the cytoplasm. Its function is as follows. During stationary phase, converts 70S ribosomes to an inactive dimeric form (100S ribosomes). In Proteus mirabilis (strain HI4320), this protein is Ribosome modulation factor.